Consider the following 253-residue polypeptide: DNA repair protein RecO (253 aa).

The protein belongs to the RecO family.

Functionally, involved in DNA repair and RecF pathway recombination. This chain is DNA repair protein RecO, found in Pediococcus pentosaceus (strain ATCC 25745 / CCUG 21536 / LMG 10740 / 183-1w).